The following is a 423-amino-acid chain: ATP-dependent RNA helicase RhlB (423 aa).

The Q motif motif lies at 9-37 (LRFSDLPLHHQVLAALQEKGFDYCTPIQA). The 178-residue stretch at 40 to 217 (LPMSLAGKDV…FEDMNDPEYV (178 aa)) folds into the Helicase ATP-binding domain. 53-60 (AQTGTGKT) contributes to the ATP binding site. The short motif at 163–166 (DEAD) is the DEAD box element. The region spanning 241-388 (KMALLLTLLE…VSQYDVAALL (148 aa)) is the Helicase C-terminal domain. The segment at 397–423 (KRGNNNSKNSANSNRTFQKKRSLKRNF) is disordered. Over residues 400-410 (NNNSKNSANSN) the composition is skewed to low complexity. Residues 413-423 (FQKKRSLKRNF) are compositionally biased toward basic residues.

It belongs to the DEAD box helicase family. RhlB subfamily. As to quaternary structure, component of the RNA degradosome, which is a multiprotein complex involved in RNA processing and mRNA degradation.

It localises to the cytoplasm. It catalyses the reaction ATP + H2O = ADP + phosphate + H(+). Its function is as follows. DEAD-box RNA helicase involved in RNA degradation. Has RNA-dependent ATPase activity and unwinds double-stranded RNA. This chain is ATP-dependent RNA helicase RhlB, found in Pasteurella multocida (strain Pm70).